Reading from the N-terminus, the 37-residue chain is Esculentin-2P (37 aa).

A disulfide bond links cysteine 31 and cysteine 37.

Expressed by the skin glands.

Its subcellular location is the secreted. Functionally, antibacterial activity against Gram-negative bacterium E.coli. This is Esculentin-2P from Lithobates pipiens (Northern leopard frog).